The chain runs to 780 residues: Protein SAV (780 aa).

ATP contacts are provided by residues 253-260 (GPPGTGKT) and 528-535 (GPPGTGKT).

It belongs to the AAA ATPase family. CDC48 subfamily.

In terms of biological role, not yet known, shows ATPase activity. This is Protein SAV (sav) from Sulfolobus acidocaldarius (strain ATCC 33909 / DSM 639 / JCM 8929 / NBRC 15157 / NCIMB 11770).